The following is a 317-amino-acid chain: 17-beta-hydroxysteroid dehydrogenase type 6 (317 aa).

A signal peptide spans 1–17; the sequence is MWFYLVTLVGLYHLLRW. 33 to 57 contacts NAD(+); that stretch reads FITGCDSGFGNLLARQLDRRGMRVL. N-linked (GlcNAc...) asparagine glycosylation is found at N71 and N161. Position 164 (S164) interacts with substrate. The active-site Proton acceptor is the Y176.

The protein belongs to the short-chain dehydrogenases/reductases (SDR) family. Detected in liver.

It is found in the microsome membrane. It localises to the early endosome membrane. The enzyme catalyses all-trans-retinol--[retinol-binding protein] + NAD(+) = all-trans-retinal--[retinol-binding protein] + NADH + H(+). The catalysed reaction is all-trans-retinol + NAD(+) = all-trans-retinal + NADH + H(+). It catalyses the reaction androsterone + NAD(+) = 5alpha-androstan-3,17-dione + NADH + H(+). It carries out the reaction testosterone + NAD(+) = androst-4-ene-3,17-dione + NADH + H(+). The enzyme catalyses 5alpha-androstane-3alpha,17beta-diol + NAD(+) = 17beta-hydroxy-5alpha-androstan-3-one + NADH + H(+). The catalysed reaction is 17beta-estradiol + NAD(+) = estrone + NADH + H(+). It catalyses the reaction 17beta-estradiol + NADP(+) = estrone + NADPH + H(+). It carries out the reaction 3alpha-hydroxy-5alpha-pregnan-20-one + NAD(+) = 5alpha-pregnane-3,20-dione + NADH + H(+). The enzyme catalyses 5alpha-androstane-3beta,17beta-diol + NAD(+) = 17beta-hydroxy-5alpha-androstan-3-one + NADH + H(+). The catalysed reaction is 3beta-hydroxy-5alpha-androstan-17-one + NAD(+) = 5alpha-androstan-3,17-dione + NADH + H(+). Inhibited by carbenoxolone and phenyl arsenoxide. Its function is as follows. NAD-dependent oxidoreductase with broad substrate specificity that shows both oxidative and reductive activity (in vitro). Has 17-beta-hydroxysteroid dehydrogenase activity towards various steroids (in vitro). Converts 5-alpha-androstan-3-alpha,17-beta-diol to androsterone and estradiol to estrone (in vitro). Has 3-alpha-hydroxysteroid dehydrogenase activity towards androsterone (in vitro). Has retinol dehydrogenase activity towards all-trans-retinol (in vitro). This is 17-beta-hydroxysteroid dehydrogenase type 6 (Hsd17b6) from Mus musculus (Mouse).